We begin with the raw amino-acid sequence, 337 residues long: Protein RETICULATA-RELATED 3, chloroplastic (337 aa).

Residues 1-59 (MAAMAAKLQLSAKSDQSSVRLPRVINLSRDPTTRVSFPRNGSVCSLHTNFSSPHLAKPC) constitute a chloroplast transit peptide. Over residues 70 to 89 (NNGGGSGSGGGGGGFGGSGG) the composition is skewed to gly residues. The disordered stretch occupies residues 70–96 (NNGGGSGSGGGGGGFGGSGGEASEESS). 2 helical membrane passes run 151–171 (FVFS…YMLA) and 216–236 (VFAS…NGLI).

It belongs to the RETICULATA family. In terms of tissue distribution, expressed in root meristem, root vasculature, distal region of young leaf primordia, leaf bundle sheath cells, hydathodes and pollen grains.

The protein resides in the plastid. Its subcellular location is the chloroplast membrane. In terms of biological role, may play a role in leaf development. Required for leaf mesophyll cell division in the early stages of leaf organogenesis. The sequence is that of Protein RETICULATA-RELATED 3, chloroplastic from Arabidopsis thaliana (Mouse-ear cress).